Reading from the N-terminus, the 349-residue chain is ATP phosphoribosyltransferase regulatory subunit (349 aa).

A disordered region spans residues 327-349; sequence GRGRGVRPRRASARGGRARARPR. The segment covering 330-349 has biased composition (basic residues); it reads RGVRPRRASARGGRARARPR.

Belongs to the class-II aminoacyl-tRNA synthetase family. HisZ subfamily. As to quaternary structure, heteromultimer composed of HisG and HisZ subunits.

Its subcellular location is the cytoplasm. It participates in amino-acid biosynthesis; L-histidine biosynthesis; L-histidine from 5-phospho-alpha-D-ribose 1-diphosphate: step 1/9. In terms of biological role, required for the first step of histidine biosynthesis. May allow the feedback regulation of ATP phosphoribosyltransferase activity by histidine. In Anaeromyxobacter dehalogenans (strain 2CP-1 / ATCC BAA-258), this protein is ATP phosphoribosyltransferase regulatory subunit.